The sequence spans 415 residues: Casein kinase I isoform delta (415 aa).

Residues 9–277 enclose the Protein kinase domain; the sequence is YRLGRKIGSG…YLRQLFRNLF (269 aa). ATP contacts are provided by residues 15-23 and K38; that span reads IGSGSFGDI. The active-site Proton acceptor is the D128. The segment at 278 to 364 is centrosomal localization signal (CLS); that stretch reads HRQGFSYDYV…TSPRPVSGME (87 aa). Over residues 301–315 the composition is skewed to basic and acidic residues; that stretch reads ADDAERERRDREERL. The interval 301-415 is disordered; sequence ADDAERERRD…SSGLQSVVHR (115 aa). An autoinhibitory region spans residues 317–342; sequence HSRNPATRGLPSTASGRLRGTQEVAP. S328 and S331 each carry phosphoserine. Polar residues predominate over residues 347 to 358; sequence TPTSHTANTSPR. S370 carries the phosphoserine modification. R375 bears the Omega-N-methylarginine mark. Residues 380 to 400 show a composition bias toward polar residues; it reads NVSSSDLTGRQDTSRMSTSQI. 6 positions are modified to phosphoserine: S382, S383, S384, P401, S407, and S411.

It belongs to the protein kinase superfamily. CK1 Ser/Thr protein kinase family. Casein kinase I subfamily. Monomer. Component of the circadian core oscillator, which includes the CRY proteins, CLOCK, or NPAS2, BMAL1 or BMAL2, CSNK1D and/or CSNK1E, TIMELESS and the PER proteins. Interacts directly with PER1 and PER2 which may lead to their degradation. Interacts with MAP1A. Interacts with MAPT/TAU, DBNDD2, AIB1/NCOA3 and ESR1. Interacts with AKAP9/AKAP450; this interaction promotes centrosomal subcellular location. Binds to tubulins in mitotic cells upon DNA damage. Interacts with GJA1. Interacts with SNAPIN. Interacts with DNMT1. Interacts with DDX3X; this interaction enhances CSNK1D kinase activity in vitro, but it is unclear whether this interaction is physiologically relevant. Interacts with FAM83A, FAM83B, FAM83E and FAM83H (via DUF1669). Post-translationally, autophosphorylated on serine and threonine residues; this autophosphorylation represses activity. Reactivated by phosphatase-mediated dephosphorylation. May be dephosphorylated by PP1. In terms of tissue distribution, expressed ubiquitously. However, kinase activity is not uniform, with highest kinase activity in splenocytes.

Its subcellular location is the cytoplasm. The protein localises to the nucleus. It is found in the cytoskeleton. The protein resides in the microtubule organizing center. It localises to the centrosome. Its subcellular location is the perinuclear region. The protein localises to the cell membrane. It is found in the spindle. The protein resides in the golgi apparatus. The catalysed reaction is L-seryl-[protein] + ATP = O-phospho-L-seryl-[protein] + ADP + H(+). It carries out the reaction L-threonyl-[protein] + ATP = O-phospho-L-threonyl-[protein] + ADP + H(+). It catalyses the reaction L-seryl-[tau protein] + ATP = O-phospho-L-seryl-[tau protein] + ADP + H(+). The enzyme catalyses L-threonyl-[tau protein] + ATP = O-phospho-L-threonyl-[tau protein] + ADP + H(+). With respect to regulation, exhibits substrate-dependent heparin activation. Drug-mediated inhibition leads to a delay of the oscillations with the magnitude of this effect dependent upon the timing of drug administration. Inhibited by phosphorylation. Essential serine/threonine-protein kinase that regulates diverse cellular growth and survival processes including Wnt signaling, DNA repair and circadian rhythms. It can phosphorylate a large number of proteins. Casein kinases are operationally defined by their preferential utilization of acidic proteins such as caseins as substrates. Phosphorylates connexin-43/GJA1, MAP1A, SNAPIN, MAPT/TAU, TOP2A, DCK, HIF1A, EIF6, p53/TP53, DVL2, DVL3, ESR1, AIB1/NCOA3, DNMT1, PKD2, YAP1, PER1 and PER2. Central component of the circadian clock. In balance with PP1, determines the circadian period length through the regulation of the speed and rhythmicity of PER1 and PER2 phosphorylation. Controls PER1 and PER2 nuclear transport and degradation. YAP1 phosphorylation promotes its SCF(beta-TRCP) E3 ubiquitin ligase-mediated ubiquitination and subsequent degradation. DNMT1 phosphorylation reduces its DNA-binding activity. Phosphorylation of ESR1 and AIB1/NCOA3 stimulates their activity and coactivation. Phosphorylation of DVL2 and DVL3 regulates WNT3A signaling pathway that controls neurite outgrowth. Phosphorylates NEDD9/HEF1. EIF6 phosphorylation promotes its nuclear export. Triggers down-regulation of dopamine receptors in the forebrain. Activates DCK in vitro by phosphorylation. TOP2A phosphorylation favors DNA cleavable complex formation. May regulate the formation of the mitotic spindle apparatus in extravillous trophoblast. Modulates connexin-43/GJA1 gap junction assembly by phosphorylation. Probably involved in lymphocyte physiology. Regulates fast synaptic transmission mediated by glutamate. This is Casein kinase I isoform delta (Csnk1d) from Mus musculus (Mouse).